The following is a 101-amino-acid chain: Large ribosomal subunit protein bL28 (101 aa).

The protein belongs to the bacterial ribosomal protein bL28 family.

This Rhodopseudomonas palustris (strain BisB18) protein is Large ribosomal subunit protein bL28.